We begin with the raw amino-acid sequence, 311 residues long: Salutaridine reductase (311 aa).

NADP(+)-binding positions include 21–24 (NKGI), arginine 44, 70–71 (DV), and asparagine 98. The substrate site is built by tyrosine 129 and serine 180. Residues tyrosine 236, lysine 240, and 267 to 272 (VKTEMN) each bind NADP(+). The active-site Proton acceptor is tyrosine 236. Cysteines 263 and 305 form a disulfide.

The protein belongs to the short-chain dehydrogenases/reductases (SDR) family.

It catalyses the reaction (7S)-salutaridinol + NADP(+) = salutaridine + NADPH + H(+). Its pathway is alkaloid biosynthesis; morphine biosynthesis. Its activity is regulated as follows. Strong substrate inhibition. Was thought to be due to mutually exclusive productive and non-productive modes of substrate binding in the active site. Alternatively, SALR may undergo significant conformational changes during catalytic turnover. In terms of biological role, short-chain dehydrogenases/reductases involved in biosynthesis of morphinan-type benzylisoquinoline and opiate alkaloids natural products. Catalyzes specifically the stereospecific conversion of salutaridine to salutaridinol. The sequence is that of Salutaridine reductase from Papaver somniferum (Opium poppy).